Consider the following 72-residue polypeptide: MARITVDDCLKRIPNRFDLTLAAAYRARQIANGAQLLIDSNAGSKDKPTVVALREIAAGQIGREVLERAIRS.

The protein belongs to the RNA polymerase subunit omega family. The RNAP catalytic core consists of 2 alpha, 1 beta, 1 beta' and 1 omega subunit. When a sigma factor is associated with the core the holoenzyme is formed, which can initiate transcription.

It carries out the reaction RNA(n) + a ribonucleoside 5'-triphosphate = RNA(n+1) + diphosphate. Promotes RNA polymerase assembly. Latches the N- and C-terminal regions of the beta' subunit thereby facilitating its interaction with the beta and alpha subunits. The protein is DNA-directed RNA polymerase subunit omega of Laribacter hongkongensis (strain HLHK9).